A 607-amino-acid polypeptide reads, in one-letter code: Arginine--tRNA ligase, cytoplasmic (607 aa).

Residue alanine 2 is modified to N-acetylalanine. At serine 15 the chain carries Phosphoserine. 2 interaction with tRNA regions span residues 59–60 and 106–111; these read EW and NGPFIQ. Residues 148–153, histidine 162, tyrosine 347, aspartate 351, and glutamine 375 contribute to the L-arginine site; that span reads EFSSPN. Positions 151–162 match the 'HIGH' region motif; sequence SPNIAKPFHAGH. Residues 484–498 form an interaction with tRNA region; sequence DTGPYLQYAHSRLRS.

Belongs to the class-I aminoacyl-tRNA synthetase family. As to quaternary structure, monomer.

It is found in the cytoplasm. The protein resides in the cytosol. The enzyme catalyses tRNA(Arg) + L-arginine + ATP = L-arginyl-tRNA(Arg) + AMP + diphosphate. Its function is as follows. Forms part of a macromolecular complex that catalyzes the attachment of specific amino acids to cognate tRNAs during protein synthesis. The protein is Arginine--tRNA ligase, cytoplasmic of Saccharomyces cerevisiae (strain ATCC 204508 / S288c) (Baker's yeast).